The following is a 27-amino-acid chain: Cruzioseptin-14 (27 aa).

As to expression, expressed by the skin glands.

The protein localises to the secreted. Functionally, has antimicrobial activity. The protein is Cruzioseptin-14 of Cruziohyla calcarifer (Splendid leaf frog).